Here is a 1457-residue protein sequence, read N- to C-terminus: Receptor-type tyrosine-protein phosphatase kappa (1457 aa).

The signal sequence occupies residues Met1–Ser25. The Extracellular segment spans residues Ala26–Lys752. One can recognise an MAM domain in the interval Phe30–Lys193. N-linked (GlcNAc...) asparagine glycosylation is found at Asn100, Asn139, and Asn210. An Ig-like C2-type domain is found at Pro195–Ser280. Residues Cys215 and Cys269 are joined by a disulfide bond. Fibronectin type-III domains follow at residues Pro293–Pro388, Thr391–Asp487, Gly490–Ser594, and Leu595–Asp688. 9 N-linked (GlcNAc...) asparagine glycosylation sites follow: Asn415, Asn423, Asn435, Asn461, Asn551, Asn585, Asn589, Asn606, and Asn689. A helical transmembrane segment spans residues Ile753 to Val774. Residues Lys775 to Ser1457 lie on the Cytoplasmic side of the membrane. Ser868 bears the Phosphoserine mark. Tyrosine-protein phosphatase domains follow at residues Phe899–Ala1159 and Leu1191–Tyr1453. Residues Asp1068, Cys1100–Arg1106, and Gln1144 each bind substrate. Cys1100 (phosphocysteine intermediate) is an active-site residue. The active-site Phosphocysteine intermediate is Cys1394.

The protein belongs to the protein-tyrosine phosphatase family. Receptor class 2B subfamily. Post-translationally, this protein undergoes proteolytic processing. High levels in liver and kidney. Lower levels in lung, brain and heart. Not seen in spleen and testis.

The protein resides in the membrane. It catalyses the reaction O-phospho-L-tyrosyl-[protein] + H2O = L-tyrosyl-[protein] + phosphate. Regulation of processes involving cell contact and adhesion such as growth control, tumor invasion, and metastasis. Negative regulator of EGFR signaling pathway. Forms complexes with beta-catenin and gamma-catenin/plakoglobin. Beta-catenin may be a substrate for the catalytic activity of PTPRK/PTP-kappa. This Mus musculus (Mouse) protein is Receptor-type tyrosine-protein phosphatase kappa (Ptprk).